The sequence spans 571 residues: Sulfite reductase [NADPH] hemoprotein beta-component (571 aa).

[4Fe-4S] cluster contacts are provided by Cys436, Cys442, Cys481, and Cys485. Cys485 contributes to the siroheme binding site.

It belongs to the nitrite and sulfite reductase 4Fe-4S domain family. In terms of assembly, alpha(8)-beta(8). The alpha component is a flavoprotein, the beta component is a hemoprotein. Siroheme serves as cofactor. [4Fe-4S] cluster is required as a cofactor.

The enzyme catalyses hydrogen sulfide + 3 NADP(+) + 3 H2O = sulfite + 3 NADPH + 4 H(+). It functions in the pathway sulfur metabolism; hydrogen sulfide biosynthesis; hydrogen sulfide from sulfite (NADPH route): step 1/1. Component of the sulfite reductase complex that catalyzes the 6-electron reduction of sulfite to sulfide. This is one of several activities required for the biosynthesis of L-cysteine from sulfate. This Bacillus subtilis (strain 168) protein is Sulfite reductase [NADPH] hemoprotein beta-component (cysI).